The primary structure comprises 80 residues: Exodeoxyribonuclease 7 small subunit (80 aa).

Belongs to the XseB family. As to quaternary structure, heterooligomer composed of large and small subunits.

It is found in the cytoplasm. The enzyme catalyses Exonucleolytic cleavage in either 5'- to 3'- or 3'- to 5'-direction to yield nucleoside 5'-phosphates.. Its function is as follows. Bidirectionally degrades single-stranded DNA into large acid-insoluble oligonucleotides, which are then degraded further into small acid-soluble oligonucleotides. The polypeptide is Exodeoxyribonuclease 7 small subunit (Klebsiella pneumoniae (strain 342)).